We begin with the raw amino-acid sequence, 945 residues long: Probable inorganic carbon transporter subunit DabA (945 aa).

Cysteine 408, aspartate 410, histidine 651, and cysteine 666 together coordinate Zn(2+).

It belongs to the inorganic carbon transporter (TC 9.A.2) DabA family. As to quaternary structure, forms a complex with DabB. Requires Zn(2+) as cofactor.

It localises to the cell inner membrane. In terms of biological role, part of an energy-coupled inorganic carbon pump. The sequence is that of Probable inorganic carbon transporter subunit DabA from Sulfurihydrogenibium azorense (strain DSM 15241 / OCM 825 / Az-Fu1).